Here is a 401-residue protein sequence, read N- to C-terminus: Dual-specificity RNA methyltransferase RlmN (401 aa).

Catalysis depends on E114, which acts as the Proton acceptor. Residues 120 to 365 enclose the Radical SAM core domain; that stretch reads DKTRGTLCVS…TMVRRTRGDD (246 aa). C127 and C370 are joined by a disulfide. 3 residues coordinate [4Fe-4S] cluster: C134, C138, and C141. S-adenosyl-L-methionine contacts are provided by residues 187–188, S219, 241–243, and N327; these read GE and SLH. Catalysis depends on C370, which acts as the S-methylcysteine intermediate.

It belongs to the radical SAM superfamily. RlmN family. Requires [4Fe-4S] cluster as cofactor.

The protein resides in the cytoplasm. The enzyme catalyses adenosine(2503) in 23S rRNA + 2 reduced [2Fe-2S]-[ferredoxin] + 2 S-adenosyl-L-methionine = 2-methyladenosine(2503) in 23S rRNA + 5'-deoxyadenosine + L-methionine + 2 oxidized [2Fe-2S]-[ferredoxin] + S-adenosyl-L-homocysteine. It catalyses the reaction adenosine(37) in tRNA + 2 reduced [2Fe-2S]-[ferredoxin] + 2 S-adenosyl-L-methionine = 2-methyladenosine(37) in tRNA + 5'-deoxyadenosine + L-methionine + 2 oxidized [2Fe-2S]-[ferredoxin] + S-adenosyl-L-homocysteine. In terms of biological role, specifically methylates position 2 of adenine 2503 in 23S rRNA and position 2 of adenine 37 in tRNAs. m2A2503 modification seems to play a crucial role in the proofreading step occurring at the peptidyl transferase center and thus would serve to optimize ribosomal fidelity. The protein is Dual-specificity RNA methyltransferase RlmN of Stenotrophomonas maltophilia (strain K279a).